We begin with the raw amino-acid sequence, 431 residues long: MKRRTFTAGLAALPFLGSSLTRAFAQDAAASLPKTYSGQKIRALASTGAAFEAMATVSRDFTEATGIAVEYVNLSYNEQYQKLILDLTSGAASFDVFNFAYQWKFEIEPYCADLANIPKEIQGAPDLALDDYPQRALEIYGRANNKLIGLPTLGDVTLFVWNKEAYKAAGLDPDAAPKTWDEVVERGAKLVSNGQFGYAMPAGKGIQTTVTWIMVFKSMGGEYFDASGAPTFASEAGVKTMKFLVEKLAAVSPPGNLAWDFPEMFNSLSTGQSGQSMMWPGAFGDLLNPKRSQVHDKIGWSPMPQASLLGGWSMGVNDASRSKDAAKLYVAWLTSPDIVRRMGLIGGAPARISALKDPELIKQAPNRPAVLAGLQGDVAEYPPIKEAEQVHIMIYDEVNAAVAKIKTPEQAASDLQGKVESFMRRRGYLKT.

Positions 1-25 are cleaved as a signal peptide; sequence MKRRTFTAGLAALPFLGSSLTRAFA.

This sequence belongs to the bacterial solute-binding protein 1 family.

Its subcellular location is the periplasm. Probably part of the binding-protein-dependent transport system y4oPQRS. This system probably transports a sugar-like molecule. The polypeptide is Probable amino-acid ABC transporter periplasmic-binding protein y4oP (Sinorhizobium fredii (strain NBRC 101917 / NGR234)).